The following is a 715-amino-acid chain: Poly(A) polymerase alpha-A (715 aa).

ATP is bound by residues 82–84 (FGP), threonine 91, 95–97 (DID), aspartate 149, lysine 210, tyrosine 219, and 228–229 (GV). Aspartate 95, aspartate 97, and aspartate 149 together coordinate Mg(2+). Positions 472 to 489 (RKQLHQLQPSHVSPKKKK) match the Nuclear localization signal 1 motif. Disordered stretches follow at residues 510 to 543 (DSDNSMSVPSPTNATRTSPLNSSGLSQGNSPAAP), 560 to 590 (QNNSTENLGGSLNESIPESATHPGFSSTPKP), and 607 to 693 (KPVS…DLSD). Composition is skewed to polar residues over residues 515 to 539 (MSVPSPTNATRTSPLNSSGLSQGNS) and 560 to 588 (QNNSTENLGGSLNESIPESATHPGFSSTP). The Nuclear localization signal 2 signature appears at 624–639 (KRTSSPSNEDSPKKNK). A compositionally biased stretch (basic and acidic residues) spans 655–673 (DQNKLETEELKEVHSEEKS). A compositionally biased stretch (polar residues) spans 674–692 (SSPVPGSLPFSQQSSTDLS).

The protein belongs to the poly(A) polymerase family. As to quaternary structure, monomer. Requires Mg(2+) as cofactor. It depends on Mn(2+) as a cofactor.

The protein resides in the nucleus. It catalyses the reaction RNA(n) + ATP = RNA(n)-3'-adenine ribonucleotide + diphosphate. Polymerase that creates the 3'-poly(A) tail of mRNA's. May acquire specificity through interaction with a cleavage and polyadenylation factor (CPSF). This Xenopus laevis (African clawed frog) protein is Poly(A) polymerase alpha-A (papola-a).